Reading from the N-terminus, the 201-residue chain is Small ribosomal subunit protein uS4 (201 aa).

In terms of domain architecture, S4 RNA-binding spans 91–155 (SRLDNVVYRA…STLPFQVARE (65 aa)).

The protein belongs to the universal ribosomal protein uS4 family. In terms of assembly, part of the 30S ribosomal subunit. Contacts protein S5. The interaction surface between S4 and S5 is involved in control of translational fidelity.

In terms of biological role, one of the primary rRNA binding proteins, it binds directly to 16S rRNA where it nucleates assembly of the body of the 30S subunit. Its function is as follows. With S5 and S12 plays an important role in translational accuracy. The chain is Small ribosomal subunit protein uS4 from Rhodococcus jostii (strain RHA1).